We begin with the raw amino-acid sequence, 355 residues long: MSERATYAARRVLPDAPLLAAAEGRAPGRRPVWFMRQAGRSLPEYREIRSGIGMLESCFDPALVCEITMQPVRRHGVDAAILFSDIVVPLKAAGIDLDIVAGTGPVVANPVRSIADVAALPRLVPEEVGAVAQAVQLLTAELGSTPLIGFAGAPFTLASYLVEGGPSRNHERTKALMHSDPKTWHALLGTLADTTITFLQAQLRAGVDAIQLFDSWAGALSLAEYREFVLPHSERVFAEVESAKVPRIHFGVGTGELLGAMGEAGADVVGVDWRIPLDVAARRVGPGKALQGNLDPAVLFAGSAAVEKQVRRITAEADAALAAGATGHIFNLGHGVLPDTDPGALTALVELVHSL.

Residues 36–40 (RQAGR), Asp85, Tyr160, Ser215, and His334 contribute to the substrate site.

The protein belongs to the uroporphyrinogen decarboxylase family. Homodimer.

Its subcellular location is the cytoplasm. It carries out the reaction uroporphyrinogen III + 4 H(+) = coproporphyrinogen III + 4 CO2. It functions in the pathway porphyrin-containing compound metabolism; protoporphyrin-IX biosynthesis; coproporphyrinogen-III from 5-aminolevulinate: step 4/4. Its function is as follows. Catalyzes the decarboxylation of four acetate groups of uroporphyrinogen-III to yield coproporphyrinogen-III. The sequence is that of Uroporphyrinogen decarboxylase from Rhodococcus opacus (strain B4).